A 152-amino-acid chain; its full sequence is uncharacterized protein (152 aa).

Residues 12 to 34 (ALLYLGGGLLAMIYGLITFFMAF) form a helical membrane-spanning segment.

This sequence to B.subtilis YfjD.

The protein localises to the membrane. This is an uncharacterized protein from Bacillus subtilis (strain 168).